The following is a 598-amino-acid chain: Probable translation initiation factor IF-2 (598 aa).

In terms of domain architecture, tr-type G spans 3 to 225 (LRCPIVSVLG…GLAQKFLEQK (223 aa)). The segment at 12–19 (GHVDHGKT) is G1. 12–19 (GHVDHGKT) lines the GTP pocket. The G2 stretch occupies residues 37 to 41 (GITQH). The interval 76–79 (DTPG) is G3. GTP contacts are provided by residues 76 to 80 (DTPGH) and 130 to 133 (NKVD). The segment at 130 to 133 (NKVD) is G4. The segment at 200 to 202 (SAM) is G5.

It belongs to the TRAFAC class translation factor GTPase superfamily. Classic translation factor GTPase family. IF-2 subfamily.

Function in general translation initiation by promoting the binding of the formylmethionine-tRNA to ribosomes. Seems to function along with eIF-2. In Methanococcus maripaludis (strain C7 / ATCC BAA-1331), this protein is Probable translation initiation factor IF-2.